The primary structure comprises 938 residues: Protein NLP3 (938 aa).

2 disordered regions span residues 1-26 (MEVD…GGGD) and 557-597 (LADD…KAEK). Positions 12-26 (AGEGGGGGIGGGGGD) are enriched in gly residues. A compositionally biased stretch (basic and acidic residues) spans 580-597 (SLHKSNKPPERRRGKAEK). Residues 585–666 (NKPPERRRGK…IESVQGSDAA (82 aa)) form the RWP-RK domain. Residues 640–662 (SRKINKVNRSLSKLKQVIESVQG) are a coiled coil. The disordered stretch occupies residues 743 to 769 (DKASHSRSSSGEGSINSRTSEASCHGS). Over residues 748-762 (SRSSSGEGSINSRTS) the composition is skewed to low complexity. The PB1 domain occupies 847-926 (TVTIKASFKE…HVIRLLVSDV (80 aa)).

The protein resides in the nucleus. In terms of biological role, probable transcription factor. This chain is Protein NLP3 (NLP3), found in Oryza sativa subsp. japonica (Rice).